Consider the following 566-residue polypeptide: Chondroitin sulfate proteoglycan 5 (566 aa).

An N-terminal signal peptide occupies residues 1–30 (MGRAGGGGPGRGPPPLLLFLGAALVLASGA). Over 31–423 (VPAREAGSAV…SIITDFQVMC (393 aa)) the chain is Extracellular. S38 is a glycosylation site (O-linked (Xyl...) (chondroitin sulfate) serine). Residues 39–82 (AVEAEELVKGSPAWEPPANDTREEAGPPAAGEDEASWTAPGGEL) are disordered. N-linked (GlcNAc...) asparagine glycosylation is present at N57. S117 carries O-linked (Xyl...) (chondroitin sulfate) serine glycosylation. Disordered regions lie at residues 143-202 (IPEA…LEPQ), 215-248 (GLDGEGRGADLGSFPGSPGTSENHPDTEGETPSW), and 262-354 (ESDF…ASSE). An O-linked (GalNAc...) serine glycan is attached at S165. An interaction with TNC and TNR region spans residues 264–301 (DFYPTTSFYDDLDEEEEEEEDDKDAVGGGDLEDENELL). Residues 273 to 286 (DDLDEEEEEEEDDK) show a composition bias toward acidic residues. Positions 371 to 413 (RSVCDLFPSYCHNGGQCYLVENIGAFCRCNTQDYIWHKGMRCE) constitute an EGF-like domain. Intrachain disulfides connect C374/C387, C381/C397, and C399/C412. The chain crosses the membrane as a helical span at residues 424–444 (VAVGSAALVLLLLFMMTVFFA). The interaction with GOPC stretch occupies residues 442–460 (FFAKKLYLLKTENTKLRRT). Topologically, residues 445-566 (KKLYLLKTEN…DVNCLQNNLT (122 aa)) are cytoplasmic. Phosphoserine occurs at positions 467, 475, 483, and 543.

As to quaternary structure, binds TNR and probably TNC. Interacts with ERBB3 and GOPC. Interacts with MDK; this interaction is independent of the presence of chondroitin sulfate chains and promotes elongation of oligodendroglial precursor-like cells. N-glycosylated. In terms of processing, O-glycosylated; contains chondroitin sulfate glycans. Part-time proteoglycan, expressed in part as a proteoglycan exhibiting chondroitin sulfate glycans and in part as a non-proteoglycan form. The relative amount of both forms depends on tissues and tissue maturation. Post-translationally, phosphorylated; in intracellular and extracellular parts. Detected in cerebrospinal fluid (at protein level). Detected in urine (at protein level). Expressed in brain (at protein level).

The protein localises to the cell membrane. The protein resides in the synaptic cell membrane. It localises to the endoplasmic reticulum membrane. It is found in the golgi apparatus membrane. Its subcellular location is the cell surface. The protein localises to the secreted. May function as a growth and differentiation factor involved in neuritogenesis. May induce ERBB3 activation. This chain is Chondroitin sulfate proteoglycan 5 (CSPG5), found in Homo sapiens (Human).